The sequence spans 97 residues: ATP-dependent Clp protease adapter protein ClpS (97 aa).

Belongs to the ClpS family. Binds to the N-terminal domain of the chaperone ClpA.

In terms of biological role, involved in the modulation of the specificity of the ClpAP-mediated ATP-dependent protein degradation. The polypeptide is ATP-dependent Clp protease adapter protein ClpS (Nostoc sp. (strain PCC 7120 / SAG 25.82 / UTEX 2576)).